Here is a 303-residue protein sequence, read N- to C-terminus: MFYGFDIGGSKIALGVYNAHRQLIWQRRVATPKDDYAQLLAAIDTLTQQADGFCGVRGSVGIGVPGLPIADDGTIFSANIPAARGRTLRADLSARLGREVRIDNDANCFALSEAWDDEFMQYPVVLGMILGTGVGGGLIVDGKPVTGRNYVVGELGHMRLPVDALRVLGRDIPLLPCGCGKYGCIEGYLSGNGFSWLWHYFYQKTHSAPEIIRRYYEGDTDALAHTERYRELLAVCLGNILTLLDPHLVVLGGGLSNFDALYDGLSERVSSHLLPVARPPRFERARHGDAGGMRGAAFLHLKF.

ATP-binding positions include 4–11 (GFDIGGSK) and 133–140 (GVGGGLIV). H157, C177, C179, and C184 together coordinate Zn(2+).

Belongs to the ROK (NagC/XylR) family. NagK subfamily.

It catalyses the reaction N-acetyl-D-glucosamine + ATP = N-acetyl-D-glucosamine 6-phosphate + ADP + H(+). It functions in the pathway cell wall biogenesis; peptidoglycan recycling. Catalyzes the phosphorylation of N-acetyl-D-glucosamine (GlcNAc) derived from cell-wall degradation, yielding GlcNAc-6-P. In Erwinia tasmaniensis (strain DSM 17950 / CFBP 7177 / CIP 109463 / NCPPB 4357 / Et1/99), this protein is N-acetyl-D-glucosamine kinase.